The following is a 79-amino-acid chain: Dicentracin (79 aa).

The first 22 residues, 1-22 (MKCATLFLVLSMVVLMAEPGDA), serve as a signal peptide directing secretion. Position 44 is a glycine amide (Gly44). Residues 47 to 79 (AQQDQQDQQYQQDQQDQQAEQYQRFNRERAAFD) constitute a propeptide that is removed on maturation. The segment at 48 to 67 (QQDQQDQQYQQDQQDQQAEQ) is disordered.

The protein belongs to the pleurocidin family.

Its subcellular location is the secreted. The sequence is that of Dicentracin from Dicentrarchus labrax (European seabass).